The chain runs to 467 residues: Mothers against decapentaplegic homolog 2 (467 aa).

Ser2 bears the N-acetylserine mark. The residue at position 8 (Thr8) is a Phosphothreonine. Residues 10–176 (PVVKRLLGWK…YQRVETPVLP (167 aa)) enclose the MH1 domain. At Lys19 the chain carries N6-acetyllysine. Residues Cys74, Cys149, Cys161, and His166 each contribute to the Zn(2+) site. Positions 207–217 (PAGIEPQSNYI) are enriched in polar residues. The interval 207-251 (PAGIEPQSNYIPETPPPGYISEDGETSDQQLNQSMDTGSPAELSP) is disordered. Thr220 carries the post-translational modification Phosphothreonine. The PY-motif motif lies at 221–225 (PPPGY). Over residues 233 to 243 (SDQQLNQSMDT) the composition is skewed to polar residues. Ser240 is modified (phosphoserine; by CAMK2). A phosphoserine mark is found at Ser245, Ser250, Ser255, Ser458, Ser460, and Ser464. In terms of domain architecture, MH2 spans 274 to 467 (WCSIAYYELN…SPSVRCSSMS (194 aa)). Phosphoserine; by TGFBR1 occurs at positions 465 and 467.

The protein belongs to the dwarfin/SMAD family. As to quaternary structure, monomer; in the absence of TGF-beta. Heterodimer; in the presence of TGF-beta. Forms a heterodimer with co-SMAD, SMAD4, in the nucleus to form the transactivation complex SMAD2/SMAD4. Found in a complex with SMAD3 and TRIM33 upon addition of TGF-beta. Identified in a complex that contains at least ZNF451, SMAD2, SMAD3 and SMAD4. Interacts (via the MH2 domain) with ZFYVE9; may form trimers with the SMAD4 co-SMAD. Interacts with TAZ/WWRT1. Interacts with FOXH1. Interacts with SNW1. Interacts with CREB-binding protein (CBP) and EP300. Interacts with SNON. Interacts with ALK4/ACVR1B. Interacts with SKOR1. Interacts with SKOR2. Interacts with PRDM16. Interacts (via MH2 domain) with LEMD3. Interacts with RBPMS. Interacts with WWP1. Interacts (dephosphorylated form, via the MH1 and MH2 domains) with RANBP3 (via its C-terminal R domain); the interaction results in the export of dephosphorylated SMAD3 out of the nucleus and termination of the TGF-beta signaling. Interacts with PDPK1 (via PH domain). Interacts with DAB2; the interactions are enhanced upon TGF-beta stimulation. Interacts with USP15. Interacts with PPP5C. Interacts with LDLRAD4 (via the SMAD interaction motif). Interacts (via MH2 domain) with PMEPA1 (via the SMAD interaction motif). Interacts with ZFHX3. Interacts with ZNF451. Interacts with SMURF2 when phosphorylated on Ser-465/467. Interacts with PPM1A. Interacts with TGF-beta. Interacts with TGFBR1. Interacts with TGIF. Interacts with SMAD3 and TRIM33. Interacts with ZNF580. Interacts with NEDD4L in response to TGF-beta. Interacts with HGS. Interacts with AIP1. Interacts with WWP1. Interacts with PML. Interacts weakly with ZNF8. Interacts (when phosphorylated) with RNF111; RNF111 acts as an enhancer of the transcriptional responses by mediating ubiquitination and degradation of SMAD2 inhibitors. Interacts with YAP1 (when phosphorylated at 'Ser-55'). Interacts when phosphorylated with IPO7; the interaction facilitates translocation of SMAD2 to the nucleus. Interacts with MTMR4; negatively regulates TGF-beta signaling through SMAD2 dephosphorylation and retention in endosomes. Post-translationally, in response to TGF-beta, phosphorylated on the C-terminal SXS motif by TGF-beta and activin type 1 receptor kinases, phosphorylation declines progressively in a KMT5A-dependent manner. Phosphorylation in this motif is required for interaction with a number of proteins including SMURF2, SNON and SMAD4 in response to TGF-beta. Dephosphorylated in this motif by PPM1A leading to disruption of the SMAD2/3-SMAD4 complex, nuclear export and termination of the TGF-beta signaling. In response to decorin, the naturally occurring inhibitor of TGF-beta signaling, phosphorylated on Ser-240 by CaMK2. Phosphorylated by MAPK3 upon EGF stimulation; which increases transcriptional activity and stability, and is blocked by calmodulin. Phosphorylated by PDPK1. In terms of processing, acetylated on Lys-19 by coactivators in response to TGF-beta signaling, which increases transcriptional activity. In response to TGF-beta, ubiquitinated by NEDD4L; which promotes its degradation. Monoubiquitinated, leading to prevent DNA-binding. Deubiquitination by USP15 alleviates inhibition and promotes activation of TGF-beta target genes. Ubiquitinated by RNF111, leading to its degradation: only SMAD2 proteins that are 'in use' are targeted by RNF111, RNF111 playing a key role in activating SMAD2 and regulating its turnover.

The protein localises to the cytoplasm. It localises to the nucleus. Functionally, receptor-regulated SMAD (R-SMAD) that is an intracellular signal transducer and transcriptional modulator activated by TGF-beta (transforming growth factor) and activin type 1 receptor kinases. Binds the TRE element in the promoter region of many genes that are regulated by TGF-beta and, on formation of the SMAD2/SMAD4 complex, activates transcription. Promotes TGFB1-mediated transcription of odontoblastic differentiation genes in dental papilla cells. Positively regulates PDPK1 kinase activity by stimulating its dissociation from the 14-3-3 protein YWHAQ which acts as a negative regulator. The sequence is that of Mothers against decapentaplegic homolog 2 (SMAD2) from Pongo abelii (Sumatran orangutan).